Consider the following 308-residue polypeptide: SAP30-binding protein (308 aa).

A disordered region spans residues 15-101 (AEDSEPESDG…EAEKRDPQEL (87 aa)). The span at 16 to 26 (EDSEPESDGEA) shows a compositional bias: acidic residues. Serine 18, serine 22, serine 43, and serine 52 each carry phosphoserine. The span at 57 to 78 (DEDGYEEEEDENSRQSEDDDSE) shows a compositional bias: acidic residues. Residues 79-99 (TEKPEADDPKDNTEAEKRDPQ) are compositionally biased toward basic and acidic residues. Residue lysine 95 forms a Glycyl lysine isopeptide (Lys-Gly) (interchain with G-Cter in SUMO2) linkage. Serine 113 is subject to Phosphoserine. Residues lysine 220, lysine 304, and lysine 305 each participate in a glycyl lysine isopeptide (Lys-Gly) (interchain with G-Cter in SUMO2) cross-link.

It belongs to the HCNGP family. Interacts with histone deacetylase complex subunit SAP30.

The protein localises to the nucleus. In terms of biological role, plays a role in transcriptional repression by promoting histone deacetylase activity, leading to deacetylation of histone H3. May be involved in the regulation of beta-2-microglobulin genes. Its function is as follows. (Microbial infection) Involved in transcriptional repression of HHV-1 genes TK and gC. The sequence is that of SAP30-binding protein from Homo sapiens (Human).